The chain runs to 526 residues: Exodeoxyribonuclease 7 large subunit (526 aa).

Positions 497 to 526 (AMTTEGGTPPGGAKKRSTKPAEPTKQGSLF) are disordered.

The protein belongs to the XseA family. In terms of assembly, heterooligomer composed of large and small subunits.

The protein localises to the cytoplasm. It catalyses the reaction Exonucleolytic cleavage in either 5'- to 3'- or 3'- to 5'-direction to yield nucleoside 5'-phosphates.. In terms of biological role, bidirectionally degrades single-stranded DNA into large acid-insoluble oligonucleotides, which are then degraded further into small acid-soluble oligonucleotides. The chain is Exodeoxyribonuclease 7 large subunit from Rhizobium etli (strain ATCC 51251 / DSM 11541 / JCM 21823 / NBRC 15573 / CFN 42).